A 95-amino-acid chain; its full sequence is Small ribosomal subunit protein bS6 (95 aa).

This sequence belongs to the bacterial ribosomal protein bS6 family.

In terms of biological role, binds together with bS18 to 16S ribosomal RNA. This Bacillus velezensis (strain DSM 23117 / BGSC 10A6 / LMG 26770 / FZB42) (Bacillus amyloliquefaciens subsp. plantarum) protein is Small ribosomal subunit protein bS6.